The primary structure comprises 162 residues: Small ribosomal subunit protein uS9 (162 aa).

This sequence belongs to the universal ribosomal protein uS9 family.

The sequence is that of Small ribosomal subunit protein uS9 from Methylobacterium sp. (strain 4-46).